Here is a 62-residue protein sequence, read N- to C-terminus: Bowman-Birk type proteinase inhibitor (62 aa).

Disulfide bonds link C8/C61, C9/C24, C12/C57, C14/C22, C31/C38, C35/C50, and C40/C48.

Forms a monomer at protein concentrations of below 1 mM. At concentrations of above 2 mM, self-associates.

In terms of biological role, inhibits trypsin but not chymotrypsin. Inhibits the trypsin-like proteinase activity present in larvae of the crop pests Adoxophyes orana, Hyphantria cunea, Lobesia botrana and Ostrinia nubilalis. This chain is Bowman-Birk type proteinase inhibitor, found in Medicago scutellata (Snail medic).